We begin with the raw amino-acid sequence, 450 residues long: tRNA-2-methylthio-N(6)-dimethylallyladenosine synthase (450 aa).

The MTTase N-terminal domain maps to Gly14–Lys132. [4Fe-4S] cluster is bound by residues Cys23, Cys59, Cys93, Cys169, Cys173, and Cys176. Residues Arg155–Lys385 form the Radical SAM core domain. Residues Lys388–Ile450 form the TRAM domain.

Belongs to the methylthiotransferase family. MiaB subfamily. In terms of assembly, monomer. It depends on [4Fe-4S] cluster as a cofactor.

Its subcellular location is the cytoplasm. It catalyses the reaction N(6)-dimethylallyladenosine(37) in tRNA + (sulfur carrier)-SH + AH2 + 2 S-adenosyl-L-methionine = 2-methylsulfanyl-N(6)-dimethylallyladenosine(37) in tRNA + (sulfur carrier)-H + 5'-deoxyadenosine + L-methionine + A + S-adenosyl-L-homocysteine + 2 H(+). Catalyzes the methylthiolation of N6-(dimethylallyl)adenosine (i(6)A), leading to the formation of 2-methylthio-N6-(dimethylallyl)adenosine (ms(2)i(6)A) at position 37 in tRNAs that read codons beginning with uridine. This chain is tRNA-2-methylthio-N(6)-dimethylallyladenosine synthase, found in Clostridium botulinum (strain ATCC 19397 / Type A).